The primary structure comprises 653 residues: Multidomain regulatory protein MT1410 (653 aa).

The region spanning 86–142 (SGSEWRLQTDYDGSGVEERYFDFVVTPRRRADGSIEGVQLIVDDVTSRVRARQAAEA) is the PAC domain. The PPM-type phosphatase domain occupies 177–396 (DIAAEYLVAA…DDVTLLAMQR (220 aa)). Positions 211, 212, 328, and 387 each coordinate Mn(2+). The tract at residues 397–544 (RAPTPPLHIT…TMVRRAAFQQ (148 aa)) is anti-sigma factor kinase region. Residues 546–653 (IDSEFVSLVE…ADTEDIFAQE (108 aa)) enclose the STAS domain. Ser600 is subject to Phosphoserine.

Requires Mg(2+) as cofactor. Mn(2+) serves as cofactor. In terms of processing, autophosphorylated.

It catalyses the reaction O-phospho-L-seryl-[protein] + H2O = L-seryl-[protein] + phosphate. It carries out the reaction O-phospho-L-threonyl-[protein] + H2O = L-threonyl-[protein] + phosphate. The catalysed reaction is L-seryl-[protein] + ATP = O-phospho-L-seryl-[protein] + ADP + H(+). The enzyme catalyses L-threonyl-[protein] + ATP = O-phospho-L-threonyl-[protein] + ADP + H(+). Functionally, primarily acts as an independent SigF regulator that is sensitive to the osmosensory signal, mediating the cross talk of PknD with the SigF regulon. Possesses both phosphatase and kinase activities. The kinase domain functions as a classic anti-sigma factor-like kinase to phosphorylate the anti-anti-sigma factor domain at the canonical regulatory site, and the phosphatase domain antagonizes this activity. The sequence is that of Multidomain regulatory protein MT1410 from Mycobacterium tuberculosis (strain CDC 1551 / Oshkosh).